The following is a 716-amino-acid chain: Putative mannosyltransferase YkcB (716 aa).

Transmembrane regions (helical) follow at residues 8-28, 44-64, 87-107, 118-135, 137-157, 159-179, 180-200, and 206-226; these read LDIV…YNIW, MMQS…FITV, SVIL…YLLI, IASF…VART, NVDA…FKAI, KGKL…FNTK, MLQA…AANA, and IVSL…WPLI. The segment at 260–363 is disordered; the sequence is TGQNSGGGQG…GSGMFGTGTP (104 aa). Positions 278–289 are enriched in polar residues; that stretch reads EMSSSDNTQAPP. Positions 290–307 are enriched in low complexity; the sequence is NQSSSNSSSSDGKSSNGN. Positions 318–347 are enriched in gly residues; that stretch reads PSGGQGGPPSGGDGGQGGPGGDGGKGGTGT. The next 6 membrane-spanning stretches (helical) occupy residues 376–396, 409–429, 433–453, 462–482, 491–511, and 518–538; these read QISW…IAGA, TVFW…AEFF, YLIM…VALV, WKAW…LFIL, VGWS…LLLF, and FSYY…MYWA. The segment at 664-716 is disordered; the sequence is VASEKWQSSSDQKTENTDSADTSSSKASGENGKMGGPGGMNQSATLYELHADE. A compositionally biased stretch (low complexity) spans 680-694; it reads TDSADTSSSKASGEN.

It belongs to the glycosyltransferase 39 family.

Its subcellular location is the cell membrane. In Bacillus subtilis (strain 168), this protein is Putative mannosyltransferase YkcB (ykcB).